A 34-amino-acid polypeptide reads, in one-letter code: Photosystem II reaction center protein M (34 aa).

A helical transmembrane segment spans residues 5–25 (ILALIAVALFISIPTAFLVII).

It belongs to the PsbM family. As to quaternary structure, PSII is composed of 1 copy each of membrane proteins PsbA, PsbB, PsbC, PsbD, PsbE, PsbF, PsbH, PsbI, PsbJ, PsbK, PsbL, PsbM, PsbT, PsbX, PsbY, PsbZ, Psb30/Ycf12, at least 3 peripheral proteins of the oxygen-evolving complex and a large number of cofactors. It forms dimeric complexes.

It is found in the plastid. It localises to the chloroplast thylakoid membrane. Functionally, one of the components of the core complex of photosystem II (PSII). PSII is a light-driven water:plastoquinone oxidoreductase that uses light energy to abstract electrons from H(2)O, generating O(2) and a proton gradient subsequently used for ATP formation. It consists of a core antenna complex that captures photons, and an electron transfer chain that converts photonic excitation into a charge separation. This subunit is found at the monomer-monomer interface. This chain is Photosystem II reaction center protein M, found in Welwitschia mirabilis (Tree tumbo).